We begin with the raw amino-acid sequence, 355 residues long: Adenine deaminase (355 aa).

The Zn(2+) site is built by histidine 24, histidine 26, and histidine 204. Glutamate 207 functions as the Proton donor in the catalytic mechanism. Aspartate 285 provides a ligand contact to Zn(2+). Aspartate 286 serves as a coordination point for substrate.

This sequence belongs to the metallo-dependent hydrolases superfamily. Adenosine and AMP deaminases family. Adenine deaminase type 2 subfamily. Zn(2+) serves as cofactor.

It catalyses the reaction adenine + H2O + H(+) = hypoxanthine + NH4(+). Its function is as follows. Catalyzes the hydrolytic deamination of adenine to hypoxanthine. Plays an important role in the purine salvage pathway and in nitrogen catabolism. The chain is Adenine deaminase from Geotalea uraniireducens (strain Rf4) (Geobacter uraniireducens).